The following is a 429-amino-acid chain: Malate dehydrogenase [NADP] 1, chloroplastic (429 aa).

The N-terminal 40 residues, 1–40, are a transit peptide targeting the chloroplast; the sequence is MGLSTAYSPVGSHLAPAPLGHRRSAQLHRPRRALLATVRC. Residues C64 and C69 are joined by a disulfide bond. 93 to 99 serves as a coordination point for NADP(+); that stretch reads GAAGMIS. 2 residues coordinate substrate: R174 and R180. NADP(+) is bound by residues N187, Q194, and 211–213; that span reads VGN. Positions 213 and 244 each coordinate substrate. Residue H269 is the Proton acceptor of the active site. C405 and C417 are joined by a disulfide.

It belongs to the LDH/MDH superfamily. MDH type 2 family. In terms of assembly, homodimer.

The protein resides in the plastid. Its subcellular location is the chloroplast. The enzyme catalyses (S)-malate + NADP(+) = oxaloacetate + NADPH + H(+). Its activity is regulated as follows. Chloroplast NADP-MDH is activated upon illumination. In order to be enzymatically active, disulfide bridges on the protein must be reduced by thioredoxin which receives electrons from ferredoxin and the electron transport system of photosynthesis. The chloroplastic, NADP-dependent form is essential for the photosynthesis C4 cycle, which allows plants to circumvent the problem of photorespiration. In C4 plants, NADP-MDH activity acts to convert oxaloacetate to malate in chloroplasts of mesophyll cells for transport to the bundle sheath cells. This Sorghum bicolor (Sorghum) protein is Malate dehydrogenase [NADP] 1, chloroplastic.